A 132-amino-acid chain; its full sequence is Large ribosomal subunit protein uL14 (132 aa).

This sequence belongs to the universal ribosomal protein uL14 family. Part of the 50S ribosomal subunit. Forms a cluster with proteins L3 and L24e, part of which may contact the 16S rRNA in 2 intersubunit bridges.

Its function is as follows. Binds to 23S rRNA. Forms part of two intersubunit bridges in the 70S ribosome. This is Large ribosomal subunit protein uL14 from Methanothrix thermoacetophila (strain DSM 6194 / JCM 14653 / NBRC 101360 / PT) (Methanosaeta thermophila).